We begin with the raw amino-acid sequence, 814 residues long: Acyl-coenzyme A dehydrogenase (814 aa).

E497 acts as the Proton acceptor in catalysis.

Belongs to the acyl-CoA dehydrogenase family. FAD serves as cofactor.

The enzyme catalyses a medium-chain 2,3-saturated fatty acyl-CoA + oxidized [electron-transfer flavoprotein] + H(+) = a medium-chain (2E)-enoyl-CoA + reduced [electron-transfer flavoprotein]. It carries out the reaction a long-chain 2,3-saturated fatty acyl-CoA + oxidized [electron-transfer flavoprotein] + H(+) = a long-chain (2E)-enoyl-CoA + reduced [electron-transfer flavoprotein]. It participates in lipid metabolism; fatty acid beta-oxidation. Its function is as follows. Catalyzes the dehydrogenation of acyl-coenzymes A (acyl-CoAs) to 2-enoyl-CoAs, the first step of the beta-oxidation cycle of fatty acid degradation. Is required for the utilization of medium- and long-chain fatty acids as sole carbon sources for growth. Is needed for bacterial survival during carbone-source starvation. In Salmonella typhi, this protein is Acyl-coenzyme A dehydrogenase (fadE).